The chain runs to 450 residues: Chromosomal replication initiator protein DnaA (450 aa).

The interval 1-84 is domain I, interacts with DnaA modulators; it reads MENIHDLWDR…AVKFIIPPNQ (84 aa). A domain II region spans residues 84 to 111; sequence QADEKLELPSSAKKQRKPYEEANDFPQS. The tract at residues 112–328 is domain III, AAA+ region; sequence MLNPKYTFDT…GALIRVVAYS (217 aa). ATP is bound by residues glycine 156, glycine 158, lysine 159, and threonine 160. Positions 329–450 are domain IV, binds dsDNA; the sequence is SLINKEITAD…KEIQEKLKQL (122 aa).

The protein belongs to the DnaA family. As to quaternary structure, oligomerizes as a right-handed, spiral filament on DNA at oriC.

Its subcellular location is the cytoplasm. Functionally, plays an essential role in the initiation and regulation of chromosomal replication. ATP-DnaA binds to the origin of replication (oriC) to initiate formation of the DNA replication initiation complex once per cell cycle. Binds the DnaA box (a 9 base pair repeat at the origin) and separates the double-stranded (ds)DNA. Forms a right-handed helical filament on oriC DNA; dsDNA binds to the exterior of the filament while single-stranded (ss)DNA is stabiized in the filament's interior. The ATP-DnaA-oriC complex binds and stabilizes one strand of the AT-rich DNA unwinding element (DUE), permitting loading of DNA polymerase. After initiation quickly degrades to an ADP-DnaA complex that is not apt for DNA replication. Binds acidic phospholipids. The sequence is that of Chromosomal replication initiator protein DnaA from Geobacillus thermodenitrificans (strain NG80-2).